Here is a 55-residue protein sequence, read N- to C-terminus: Large ribosomal subunit protein bL33 (55 aa).

Positions 1-11 (MAKGGREKIKL) are enriched in basic and acidic residues. Residues 1–26 (MAKGGREKIKLESTAGTGHFYTTDKN) are disordered.

This sequence belongs to the bacterial ribosomal protein bL33 family.

This is Large ribosomal subunit protein bL33 from Methylibium petroleiphilum (strain ATCC BAA-1232 / LMG 22953 / PM1).